The chain runs to 219 residues: Octanoyltransferase (219 aa).

In terms of domain architecture, BPL/LPL catalytic spans 24–212 (KFRRECILFL…NLNSFLGPIS (189 aa)). Residues 69–76 (RGGDFTAH), 140–142 (SIG), and 153–155 (GVA) each bind substrate. Cysteine 171 acts as the Acyl-thioester intermediate in catalysis.

The protein belongs to the LipB family.

It is found in the cytoplasm. It catalyses the reaction octanoyl-[ACP] + L-lysyl-[protein] = N(6)-octanoyl-L-lysyl-[protein] + holo-[ACP] + H(+). It participates in protein modification; protein lipoylation via endogenous pathway; protein N(6)-(lipoyl)lysine from octanoyl-[acyl-carrier-protein]: step 1/2. In terms of biological role, catalyzes the transfer of endogenously produced octanoic acid from octanoyl-acyl-carrier-protein onto the lipoyl domains of lipoate-dependent enzymes. Lipoyl-ACP can also act as a substrate although octanoyl-ACP is likely to be the physiological substrate. The polypeptide is Octanoyltransferase (Leptospira borgpetersenii serovar Hardjo-bovis (strain JB197)).